Here is a 466-residue protein sequence, read N- to C-terminus: Vimentin (466 aa).

Composition is skewed to low complexity over residues 1–13 and 20–33; these read MSTR…SYRR and TSSR…YVTT. Residues 1-33 are disordered; sequence MSTRSVSSSSYRRMFGGSGTSSRPSSNRSYVTT. Ser2 is modified (N-acetylserine). Residues 2 to 95 form a head region; sequence STRSVSSSSY…FSLADAINTE (94 aa). Ser5 carries the phosphoserine modification. Ser7 is subject to Phosphoserine; by PKA and PKC; alternate. An O-linked (GlcNAc) serine; alternate glycan is attached at Ser7. Ser8 carries the post-translational modification Phosphoserine. Phosphoserine; by PKC is present on residues Ser9 and Ser10. Phosphothreonine is present on Thr20. Phosphoserine occurs at positions 25 and 26. O-linked (GlcNAc) threonine glycosylation occurs at Thr33. A glycan (O-linked (GlcNAc) serine; alternate) is linked at Ser34. The residue at position 34 (Ser34) is a Phosphoserine; by PKC; alternate. Ser39 carries the post-translational modification Phosphoserine; by CaMK2, PKA, PKC and ROCK2. At Ser42 the chain carries Phosphoserine; by PKC. Ser47 is modified (phosphoserine; by PKA). 2 positions are modified to phosphoserine: Ser49 and Ser51. Tyr53 bears the Phosphotyrosine mark. 2 positions are modified to phosphoserine: Ser55 and Ser56. Phosphotyrosine is present on Tyr61. Residue Ser66 is modified to Phosphoserine; by PKA and PKC. Ser72 bears the Phosphoserine; by AURKB and ROCK2 mark. 3 positions are modified to phosphoserine: Ser73, Ser83, and Ser87. The interval 96 to 131 is coil 1A; that stretch reads FKNTRTNEKVELQELNDRFANYIDKVRFLEQQNKIL. Positions 96 to 131 form a coiled coil; it reads FKNTRTNEKVELQELNDRFANYIDKVRFLEQQNKIL. Residues 103–411 form the IF rod domain; sequence EKVELQELND…KLLEGEESRI (309 aa). Lys104 is covalently cross-linked (Glycyl lysine isopeptide (Lys-Gly) (interchain with G-Cter in SUMO2)). Tyr117 is modified (phosphotyrosine). Residues Lys120, Lys129, and Lys139 each carry the N6-acetyllysine; alternate modification. 2 positions are modified to N6-succinyllysine; alternate: Lys120 and Lys129. Glycyl lysine isopeptide (Lys-Gly) (interchain with G-Cter in SUMO2); alternate cross-links involve residues Lys120, Lys129, and Lys139. Positions 132 to 153 are linker 1; sequence LAELEQLKGQGKSRLGDLYEEE. The residue at position 144 (Ser144) is a Phosphoserine. A coiled-coil region spans residues 154–245; the sequence is MRELRRQVDQ…KLHDEEIQEL (92 aa). The segment at 154–245 is coil 1B; it reads MRELRRQVDQ…KLHDEEIQEL (92 aa). Position 168 is an N6-acetyllysine (Lys168). The residue at position 188 (Lys188) is an N6-acetyllysine; alternate. Position 188 is an N6-succinyllysine; alternate (Lys188). Ser214 carries the post-translational modification Phosphoserine. An N6-acetyllysine; alternate modification is found at Lys223. Lys223 participates in a covalent cross-link: Glycyl lysine isopeptide (Lys-Gly) (interchain with G-Cter in SUMO2); alternate. A Phosphoserine modification is found at Ser226. Lys235 is modified (N6-acetyllysine). The linker 12 stretch occupies residues 246 to 268; sequence QAQIQEQHVQIDVDVSKPDLTAA. Residue Lys262 forms a Glycyl lysine isopeptide (Lys-Gly) (interchain with G-Cter in SUMO2) linkage. The tract at residues 269 to 407 is coil 2; it reads LRDVRQQYES…ATYRKLLEGE (139 aa). The residue at position 294 (Lys294) is an N6-acetyllysine; alternate. At Lys294 the chain carries N6-succinyllysine; alternate. A Glycyl lysine isopeptide (Lys-Gly) (interchain with G-Cter in SUMO2); alternate cross-link involves residue Lys294. At Ser299 the chain carries Phosphoserine. Positions 303–407 form a coiled coil; it reads NRNNDALRQA…ATYRKLLEGE (105 aa). Residue Lys313 forms a Glycyl lysine isopeptide (Lys-Gly) (interchain with G-Cter in SUMO2) linkage. Ser325 is modified (phosphoserine). The [IL]-x-C-x-x-[DE] motif signature appears at 326–329; that stretch reads LTCE. An N6-acetyllysine; alternate modification is found at Lys373. A Glycyl lysine isopeptide (Lys-Gly) (interchain with G-Cter in SUMO2); alternate cross-link involves residue Lys373. Residues 408-466 form a tail region; sequence ESRISLPLPNFSSLNLRETNLESLPLVDTHSKRTLLIKTVETRDGQVINETSQHHDDLE. Ser409, Ser412, Ser419, and Ser420 each carry phosphoserine. At Thr426 the chain carries Phosphothreonine. Residue Ser430 is modified to Phosphoserine. The residue at position 436 (Thr436) is a Phosphothreonine. Phosphoserine is present on Ser438. Residue Lys439 forms a Glycyl lysine isopeptide (Lys-Gly) (interchain with G-Cter in SUMO2) linkage. Lys445 carries the N6-acetyllysine; alternate modification. N6-succinyllysine; alternate is present on Lys445. Lys445 participates in a covalent cross-link: Glycyl lysine isopeptide (Lys-Gly) (interchain with G-Cter in SUMO2); alternate. A Glycyl lysine isopeptide (Lys-Gly) (interchain with G-Cter in SUMO1); alternate cross-link involves residue Lys445. A phosphothreonine mark is found at Thr446 and Thr458. Position 459 is a phosphoserine (Ser459).

Belongs to the intermediate filament family. Homomer assembled from elementary dimers. Identified in complexes that contain VIM, EZR, AHNAK, BFSP1, BFSP2, ANK2, PLEC, PRX and spectrin. Interacts with BCAS3. Interacts with LGSN. Interacts with SYNM. Interacts (via rod region) with PLEC (via CH 1 domain). Interacts with STK33. Interacts with LARP6. Interacts with RAB8B. Interacts with TOR1A; the interaction associates TOR1A with the cytoskeleton. Interacts with TOR1AIP1. Interacts with TOR1AIP1. Interacts with DIAPH1. Interacts with EPPK1; interaction is dependent of higher-order structure of intermediate filament. Interacts with the non-receptor tyrosine kinase SRMS; the interaction leads to phosphorylation of VIM. Interacts with NOD2. Interacts (via head region) with CORO1C. Interacts with HDGF. Interacts with PRKCE (via phorbol-ester/DAG-type 2 domain). Interacts with BFSP2. Interacts with PPL. Interacts with PKP1 and PKP2. Interacts with SCRIB (via PDZ domains); the interaction protects SCRIB from proteasomal degradation and facilitates SCRIB localization to intermediate filaments, the interaction is reduced by cell contact inhibition. One of the most prominent phosphoproteins in various cells of mesenchymal origin. Phosphorylation is enhanced during cell division, at which time vimentin filaments are significantly reorganized. Phosphorylation by PKN1 inhibits the formation of filaments. Filament disassembly during mitosis is promoted by phosphorylation at Ser-55 as well as by nestin. Phosphorylated at Ser-56 by CDK5 during neutrophil secretion in the cytoplasm. Phosphorylated by STK33. Phosphorylated on tyrosine residues by SRMS. In terms of processing, S-nitrosylation is induced by interferon-gamma and oxidatively-modified low-densitity lipoprotein (LDL(ox)) possibly implicating the iNOS-S100A8/9 transnitrosylase complex.

It is found in the cytoplasm. Its subcellular location is the cytoskeleton. It localises to the nucleus matrix. The protein resides in the cell membrane. In terms of biological role, vimentins are class-III intermediate filaments found in various non-epithelial cells, especially mesenchymal cells. Vimentin is attached to the nucleus, endoplasmic reticulum, and mitochondria, either laterally or terminally. Plays a role in cell directional movement, orientation, cell sheet organization and Golgi complex polarization at the cell migration front. Protects SCRIB from proteasomal degradation and facilitates its localization to intermediate filaments in a cell contact-mediated manner. Its function is as follows. Involved with LARP6 in the stabilization of type I collagen mRNAs for CO1A1 and CO1A2. The sequence is that of Vimentin from Rattus norvegicus (Rat).